A 346-amino-acid polypeptide reads, in one-letter code: RNA-directed DNA methylation 4 (346 aa).

Residue Met-1 is modified to N-acetylmethionine. 3 stretches are compositionally biased toward acidic residues: residues 253 to 268 (FCDGSDESDYDSEDSN), 278 to 312 (PEEEEEEEEEDDDDDDDDESEEEKSEASDESDDEE), and 323 to 332 (GDDEFDDYAE). Positions 253-346 (FCDGSDESDY…YSESDEEFES (94 aa)) are disordered.

It belongs to the IWR1/SLC7A6OS family. In terms of assembly, interacts with NRPD1. Associates with Pol II and Pol V complexes.

Functionally, probable regulatory factor for several RNA polymerases. Effector involved in facilitation of Pol V transcription as RNA scaffold and recruitment of silencing complex to target genomic sites. The polypeptide is RNA-directed DNA methylation 4 (RDM4) (Arabidopsis thaliana (Mouse-ear cress)).